The primary structure comprises 62 residues: ACQLITAEDSRGTQLHRALRSTSKVSKSTSCVEAGSYCRPNVKLCCGFCSPYSKICMNFPKN.

Positions 1–7 are cleaved as a signal peptide; the sequence is ACQLITA. Positions 8–27 are excised as a propeptide; it reads EDSRGTQLHRALRSTSKVSK. Disulfide bonds link C31/C46, C38/C49, and C45/C56.

It belongs to the conotoxin O1 superfamily. As to expression, expressed by the venom duct.

It is found in the secreted. Its function is as follows. Omega-conotoxins act at presynaptic membranes, they bind and block voltage-gated calcium channels (Cav). This is Omega-conotoxin-like Bu11 from Conus bullatus (Bubble cone).